A 248-amino-acid polypeptide reads, in one-letter code: DNA polymerase sliding clamp 2 (248 aa).

It belongs to the PCNA family. In terms of assembly, homotrimer. The subunits circularize to form a toroid; DNA passes through its center. Replication factor C (RFC) is required to load the toroid on the DNA.

Functionally, sliding clamp subunit that acts as a moving platform for DNA processing. Responsible for tethering the catalytic subunit of DNA polymerase and other proteins to DNA during high-speed replication. This chain is DNA polymerase sliding clamp 2, found in Sulfurisphaera ohwakuensis.